The sequence spans 422 residues: p-hydroxyphenylacetate 3-hydroxylase, oxygenase component (422 aa).

Trp-112 contacts FMN. The substrate site is built by His-120 and Ser-146. FMN contacts are provided by residues Ser-146 to Ile-148 and Trp-169 to Ser-171. Substrate is bound at residue Arg-263–Phe-266. Residues Arg-292, Tyr-296, Ala-374 to Thr-375, and His-396 to Ala-397 contribute to the FMN site. Tyr-296 lines the substrate pocket.

Belongs to the HpaH/HsaA monooxygenase family. In terms of assembly, homotetramer. The p-hydroxyphenylacetate 3-hydroxylase (HpaH) is composed of an oxygenase component C2 and a reductase component C1.

It catalyses the reaction 4-hydroxyphenylacetate + FMNH2 + O2 = 3,4-dihydroxyphenylacetate + FMN + H2O + H(+). It carries out the reaction 4-hydroxyphenylacetate + FADH2 + O2 = 3,4-dihydroxyphenylacetate + FAD + H2O + H(+). It functions in the pathway aromatic compound metabolism; 4-hydroxyphenylacetate degradation; pyruvate and succinate semialdehyde from 4-hydroxyphenylacetate: step 1/7. Its activity is regulated as follows. Inhibited by flavin concentrations greater than 15 uM. Also inhibited by excess p-hydroxyphenylacetate (HPA). Functionally, oxygenase component of a two-component system that utilizes reduced FMN (FMNH2) supplied by the reductase component to catalyze the hydroxylation of 4-hydroxyphenylacetic acid, leading to the production of 3,4-dihydroxyphenylacetate (3,4-DHPA). Also utilizes other reduced flavins such as FADH2 and reduced riboflavin to a lesser extent. Only the compounds with a hydroxyl group in the para (p-) position can be hydroxylated. May also oxidize phenol to catechol, and hydroxylate other phenol derivatives. The sequence is that of p-hydroxyphenylacetate 3-hydroxylase, oxygenase component from Acinetobacter baumannii.